The chain runs to 278 residues: Cysteine-rich repeat secretory protein 18 (278 aa).

Residues 1 to 32 form the signal peptide; that stretch reads MYSSSSVSKRFVLVPIVVVVTTQLLLVRNVSS. 2 consecutive Gnk2-homologous domains span residues 39-147 and 160-267; these read YLHH…SLDT and PSAK…LYPF.

It belongs to the cysteine-rich repeat secretory protein family.

The protein localises to the secreted. The sequence is that of Cysteine-rich repeat secretory protein 18 (CRRSP18) from Arabidopsis thaliana (Mouse-ear cress).